Reading from the N-terminus, the 451-residue chain is Chromosomal replication initiator protein DnaA (451 aa).

Residues 1-101 (MTENETIFWN…TSNHIFSRQT (101 aa)) form a domain I, interacts with DnaA modulators region. The interval 101–110 (TINSLPAITS) is domain II. Residues 111-329 (DLNPKYSFDN…GALKDISLVA (219 aa)) are domain III, AAA+ region. Glycine 155, glycine 157, lysine 158, and threonine 159 together coordinate ATP. The tract at residues 330-451 (NFKEIDKITV…EIETIKNKIK (122 aa)) is domain IV, binds dsDNA.

The protein belongs to the DnaA family. Oligomerizes as a right-handed, spiral filament on DNA at oriC.

The protein resides in the cytoplasm. In terms of biological role, plays an essential role in the initiation and regulation of chromosomal replication. ATP-DnaA binds to the origin of replication (oriC) to initiate formation of the DNA replication initiation complex once per cell cycle. Binds the DnaA box (a 9 base pair repeat at the origin) and separates the double-stranded (ds)DNA. Forms a right-handed helical filament on oriC DNA; dsDNA binds to the exterior of the filament while single-stranded (ss)DNA is stabiized in the filament's interior. The ATP-DnaA-oriC complex binds and stabilizes one strand of the AT-rich DNA unwinding element (DUE), permitting loading of DNA polymerase. After initiation quickly degrades to an ADP-DnaA complex that is not apt for DNA replication. Binds acidic phospholipids. The protein is Chromosomal replication initiator protein DnaA of Streptococcus uberis (strain ATCC BAA-854 / 0140J).